The chain runs to 112 residues: MYB-like transcription factor ETC2 (112 aa).

Residues 41–78 (TEQEEDLISRMYRLVGNRWDLIAGRVVGRKANEIERYW) form the Myb-like domain.

Interacts with GL3. As to expression, expressed in stomatal guard mother cells, young stomata and trichomes of young leaves, and inflorescences.

The protein resides in the nucleus. Functionally, MYB-type transcription factor involved in epidermal cell fate specification. Acts as a negative regulator of trichome development, by mediating lateral inhibition. Promotes the formation of hair developing cells in H position in root epidermis, probably by inhibiting non-hair cell formation. This is MYB-like transcription factor ETC2 (ETC2) from Arabidopsis thaliana (Mouse-ear cress).